A 289-amino-acid chain; its full sequence is Probable acetolactate synthase small subunit (289 aa).

S34 is subject to Phosphoserine. The ACT domain maps to 72 to 149 (VFNCLVQNEP…AVLDYTGTSM (78 aa)).

The protein belongs to the acetolactate synthase small subunit family.

It localises to the cytoplasm. It functions in the pathway amino-acid biosynthesis; L-isoleucine biosynthesis; L-isoleucine from 2-oxobutanoate: step 1/4. Its pathway is amino-acid biosynthesis; L-valine biosynthesis; L-valine from pyruvate: step 1/4. Stimulates activity of the acetolactate synthase catalytic subunit ilv1. The sequence is that of Probable acetolactate synthase small subunit from Schizosaccharomyces pombe (strain 972 / ATCC 24843) (Fission yeast).